The sequence spans 688 residues: Elongation factor G (688 aa).

A tr-type G domain is found at 8–282; it reads DKFRNFGIMA…GVVDYLPSPL (275 aa). GTP-binding positions include 17-24, 81-85, and 135-138; these read AHIDAGKT, DTPGH, and NKMD.

This sequence belongs to the TRAFAC class translation factor GTPase superfamily. Classic translation factor GTPase family. EF-G/EF-2 subfamily.

Its subcellular location is the cytoplasm. In terms of biological role, catalyzes the GTP-dependent ribosomal translocation step during translation elongation. During this step, the ribosome changes from the pre-translocational (PRE) to the post-translocational (POST) state as the newly formed A-site-bound peptidyl-tRNA and P-site-bound deacylated tRNA move to the P and E sites, respectively. Catalyzes the coordinated movement of the two tRNA molecules, the mRNA and conformational changes in the ribosome. The sequence is that of Elongation factor G from Clostridium botulinum (strain Eklund 17B / Type B).